The primary structure comprises 528 residues: Apolipoprotein N-acyltransferase (528 aa).

5 helical membrane passes run 8–28 (IMLL…AVGA), 69–89 (AFWI…WWLG), 99–119 (FAWA…VFYG), 178–198 (VLGL…PALL), and 203–223 (GAKL…GYGA). A CN hydrolase domain is found at 241–490 (VQPNIDQAAK…EGVENATFTL (250 aa)). E285 serves as the catalytic Proton acceptor. The active site involves K349. C402 acts as the Nucleophile in catalysis.

Belongs to the CN hydrolase family. Apolipoprotein N-acyltransferase subfamily.

It localises to the cell inner membrane. It carries out the reaction N-terminal S-1,2-diacyl-sn-glyceryl-L-cysteinyl-[lipoprotein] + a glycerophospholipid = N-acyl-S-1,2-diacyl-sn-glyceryl-L-cysteinyl-[lipoprotein] + a 2-acyl-sn-glycero-3-phospholipid + H(+). Its pathway is protein modification; lipoprotein biosynthesis (N-acyl transfer). Catalyzes the phospholipid dependent N-acylation of the N-terminal cysteine of apolipoprotein, the last step in lipoprotein maturation. The sequence is that of Apolipoprotein N-acyltransferase from Allorhizobium ampelinum (strain ATCC BAA-846 / DSM 112012 / S4) (Agrobacterium vitis (strain S4)).